Here is a 1074-residue protein sequence, read N- to C-terminus: Zinc finger protein 518B (1074 aa).

A compositionally biased stretch (polar residues) spans 12–24 (HLNGGHNSLTMSP). The interval 12-36 (HLNGGHNSLTMSPKQPDANGAPRPN) is disordered. 2 C2H2-type zinc fingers span residues 162–184 (FICS…LVKH) and 190–213 (YQCE…KRVH). Residues Lys482, Lys491, and Lys558 each participate in a glycyl lysine isopeptide (Lys-Gly) (interchain with G-Cter in SUMO2) cross-link. The disordered stretch occupies residues 568–590 (SNRKQEDNQTEEHKAVSTVGQIS). The segment covering 570 to 582 (RKQEDNQTEEHKA) has biased composition (basic and acidic residues). A Glycyl lysine isopeptide (Lys-Gly) (interchain with G-Cter in SUMO2) cross-link involves residue Lys594. 2 disordered regions span residues 603 to 632 (TGED…DGPV) and 678 to 704 (KPSS…KATS). The span at 604–622 (GEDRSQQPGDKPLELKNSE) shows a compositional bias: basic and acidic residues. A compositionally biased stretch (polar residues) spans 693 to 704 (GQASKGTSKATS). Glycyl lysine isopeptide (Lys-Gly) (interchain with G-Cter in SUMO2) cross-links involve residues Lys809, Lys846, and Lys860. The segment at 1036 to 1058 (FKCWFCGRLYEDQEEWMSHGQRH) adopts a C2H2-type 3 zinc-finger fold.

This sequence belongs to the krueppel C2H2-type zinc-finger protein family.

It localises to the nucleus. Through its association with the EHMT1-EHMT2/G9A and PRC2/EED-EZH2 histone methyltransferase complexes may function in gene silencing, regulating repressive post-translational methylation of histone tails at promoters of target genes. The polypeptide is Zinc finger protein 518B (ZNF518B) (Homo sapiens (Human)).